A 335-amino-acid chain; its full sequence is Tumor necrosis factor receptor superfamily member 6 (335 aa).

The first 25 residues, 1-25 (MLGIWTLLPLVLTSVARLSSKSVNA), serve as a signal peptide directing secretion. At 26 to 173 (QVTDINSKGL…KCKEEGSRSN (148 aa)) the chain is on the extracellular side. T28 carries an O-linked (GalNAc...) threonine glycan. 3 TNFR-Cys repeats span residues 47 to 83 (QNLE…PDCV), 84 to 127 (PCQE…NTKC), and 128 to 166 (RCKP…TKCK). Cystine bridges form between C59/C73, C63/C82, C85/C101, C104/C119, C107/C127, C129/C143, C146/C157, and C149/C165. 2 N-linked (GlcNAc...) asparagine glycosylation sites follow: N118 and N136. A helical membrane pass occupies residues 174 to 190 (LGWLCLLLLPIPLIVWV). The Cytoplasmic portion of the chain corresponds to 191-335 (KRKEVQKTCR…NFRNEIQSLV (145 aa)). A lipid anchor (S-palmitoyl cysteine) is attached at C199. S209 carries the phosphoserine modification. The tract at residues 212-317 (SPTLNPETVA…EKIQTIILKD (106 aa)) is interaction with HIPK3. A Phosphothreonine modification is found at T214. S225 carries the post-translational modification Phosphoserine. The interaction with CALM stretch occupies residues 230–254 (SKYITTIAGVMTLSQVKGFVRKNGV). The 85-residue stretch at 230-314 (SKYITTIAGV…TLAEKIQTII (85 aa)) folds into the Death domain. Residue R250 is glycosylated ((Microbial infection) N-beta-linked (GlcNAc) arginine).

In terms of assembly, component of the death-induced signaling complex (DISC) composed of cell surface receptor FAS/CD95, adapter protein FADD and the CASP8 protease; recruitment of CASP8 to the complex is required for processing of CASP8 into the p18 and p10 subunits. Interacts directly (via DED domain) with NOL3 (via CARD domain); inhibits death-inducing signaling complex (DISC) assembly by inhibiting the increase in FAS-FADD binding induced by FAS activation. Binds DAXX. Interacts with HIPK3. Part of a complex containing HIPK3 and FADD. Binds RIPK1 and FAIM2. Interacts with BABAM2 and FEM1B. Interacts with CALM. In the absence of stimulation, interacts with BIRC2, DDX3X and GSK3B. The interaction with BIRC2 and DDX3X is further enhanced upon receptor stimulation and accompanied by DDX3X and BIRC2 cleavage. Post-translationally, (Microbial infection) Glycosylated at Arg-250 by enteropathogenic E.coli protein NleB1: arginine GlcNAcylation prevents homotypic/heterotypic death domain interactions. Palmitoylated. Palmitoylation by ZDHHC7 prevents the lysosomal degradation of FAS regulating its expression at the plasma membrane. In terms of processing, N- and O-glycosylated. O-glycosylated with core 1 or possibly core 8 glycans. Isoform 1 and isoform 6 are expressed at equal levels in resting peripheral blood mononuclear cells. After activation there is an increase in isoform 1 and decrease in the levels of isoform 6.

The protein resides in the cell membrane. It is found in the membrane raft. The protein localises to the secreted. In terms of biological role, receptor for TNFSF6/FASLG. The adapter molecule FADD recruits caspase CASP8 to the activated receptor. The resulting death-inducing signaling complex (DISC) performs CASP8 proteolytic activation which initiates the subsequent cascade of caspases (aspartate-specific cysteine proteases) mediating apoptosis. FAS-mediated apoptosis may have a role in the induction of peripheral tolerance, in the antigen-stimulated suicide of mature T-cells, or both. The secreted isoforms 2 to 6 block apoptosis (in vitro). The protein is Tumor necrosis factor receptor superfamily member 6 (FAS) of Homo sapiens (Human).